Here is a 376-residue protein sequence, read N- to C-terminus: 3-aminomethylindole N-methyltransferase (376 aa).

S-adenosyl-L-homocysteine-binding residues include Gly-220, Asp-243, Asp-263, and Met-264.

It belongs to the class I-like SAM-binding methyltransferase superfamily. Cation-independent O-methyltransferase family. As to expression, more present in the fifth leaf than in the second leaf (at protein level).

The enzyme catalyses 3-(aminomethyl)indole + 2 S-adenosyl-L-methionine = gramine + 2 S-adenosyl-L-homocysteine + 2 H(+). It functions in the pathway alkaloid biosynthesis. Its activity is regulated as follows. Repressed by sodium carbonate, sodium bicarbonate and K-phosphate. In terms of biological role, methylates 3-aminomethylindole (AMI) and N-methyl-3-aminomethylindole (MAMI), two substrates involved in gramine biosynthesis, a toxic indole alkaloid. Can use S-adenosyl-L-methionine (AdoMet) as a methyl donor. Unable to mediate caffeic acid O-methylation. The chain is 3-aminomethylindole N-methyltransferase from Hordeum vulgare subsp. vulgare (Domesticated barley).